Here is a 252-residue protein sequence, read N- to C-terminus: Triosephosphate isomerase (252 aa).

A substrate-binding site is contributed by Asn-10–Lys-12. The active-site Electrophile is the His-96. Catalysis depends on Glu-168, which acts as the Proton acceptor. Substrate-binding positions include Gly-174, Ser-214, and Gly-235–Gly-236.

This sequence belongs to the triosephosphate isomerase family. Homodimer.

It is found in the cytoplasm. It carries out the reaction D-glyceraldehyde 3-phosphate = dihydroxyacetone phosphate. Its pathway is carbohydrate biosynthesis; gluconeogenesis. The protein operates within carbohydrate degradation; glycolysis; D-glyceraldehyde 3-phosphate from glycerone phosphate: step 1/1. Its function is as follows. Involved in the gluconeogenesis. Catalyzes stereospecifically the conversion of dihydroxyacetone phosphate (DHAP) to D-glyceraldehyde-3-phosphate (G3P). This chain is Triosephosphate isomerase, found in Streptococcus pyogenes serotype M2 (strain MGAS10270).